The primary structure comprises 722 residues: Pre-B-cell leukemia transcription factor-interacting protein 1 (722 aa).

A compositionally biased stretch (polar residues) spans 1–10 (MASCPDSDNS). The disordered stretch occupies residues 1 to 180 (MASCPDSDNS…TAAVDGEDQA (180 aa)). Basic and acidic residues predominate over residues 88 to 97 (DDGHGTKRPG). Serine 133, serine 144, serine 145, and serine 146 each carry phosphoserine. Position 150 is a phosphothreonine (threonine 150). At serine 166 the chain carries Phosphoserine. 2 coiled-coil regions span residues 266 to 346 (LLLD…RGVD) and 373 to 401 (DTSLLEQHKQLEAEAKALRQELQKQWQLL). Over residues 442-453 (QGINTGRSSNDS) the composition is skewed to polar residues. Disordered stretches follow at residues 442–562 (QGIN…SPDS) and 691–722 (RRSKKKEKQPWNHRAVGPREEHSRHPHHYHQG). 2 stretches are compositionally biased toward basic and acidic residues: residues 465 to 536 (HPRE…DPKV) and 546 to 559 (SGERQKHSWGKDNS). Residues 482–502 (QKAEHWKLKKEESGQDRKKSW) carry the Nuclear localization signal motif. Position 559 is a phosphoserine (serine 559). Residues 686–711 (DKALKRRSKKKEKQPWNHRAVGPREE) carry the Nuclear localization signal motif.

In terms of assembly, interacts with ESR1, PBX1, PBX2 and PBX3. Interacts with TEX11.

It localises to the cytoplasm. Its subcellular location is the cytoskeleton. The protein resides in the nucleus. Its function is as follows. Regulator of pre-B-cell leukemia transcription factors (BPXs) function. Inhibits the binding of PBX1-HOX complex to DNA and blocks the transcriptional activity of E2A-PBX1. Tethers estrogen receptor-alpha (ESR1) to microtubules and allows them to influence estrogen receptors-alpha signaling. This Rattus norvegicus (Rat) protein is Pre-B-cell leukemia transcription factor-interacting protein 1 (Pbxip1).